Reading from the N-terminus, the 482-residue chain is tRNA(Ile)-lysidine synthase (482 aa).

ATP is bound at residue 28-33 (SGGPDS).

Belongs to the tRNA(Ile)-lysidine synthase family.

Its subcellular location is the cytoplasm. The catalysed reaction is cytidine(34) in tRNA(Ile2) + L-lysine + ATP = lysidine(34) in tRNA(Ile2) + AMP + diphosphate + H(+). Ligates lysine onto the cytidine present at position 34 of the AUA codon-specific tRNA(Ile) that contains the anticodon CAU, in an ATP-dependent manner. Cytidine is converted to lysidine, thus changing the amino acid specificity of the tRNA from methionine to isoleucine. This chain is tRNA(Ile)-lysidine synthase, found in Symbiobacterium thermophilum (strain DSM 24528 / JCM 14929 / IAM 14863 / T).